The chain runs to 405 residues: Tryptophan synthase beta chain (405 aa).

Position 98 is an N6-(pyridoxal phosphate)lysine (K98).

The protein belongs to the TrpB family. In terms of assembly, tetramer of two alpha and two beta chains. Requires pyridoxal 5'-phosphate as cofactor.

The enzyme catalyses (1S,2R)-1-C-(indol-3-yl)glycerol 3-phosphate + L-serine = D-glyceraldehyde 3-phosphate + L-tryptophan + H2O. The protein operates within amino-acid biosynthesis; L-tryptophan biosynthesis; L-tryptophan from chorismate: step 5/5. The beta subunit is responsible for the synthesis of L-tryptophan from indole and L-serine. The protein is Tryptophan synthase beta chain of Parvibaculum lavamentivorans (strain DS-1 / DSM 13023 / NCIMB 13966).